The following is a 310-amino-acid chain: MLTTEKLVETLKLDLIAGEEGLSKPIKNADISRPGLEMAGYFSHYASDRIQLLGTTELSFYNLLPDKDRAGRMRKLCRPETPAIIVTRGLQPPEELVEAAKELNTPLIVAKDATTSLMSRLTTFLEHALAKTTSLHGVLVDVYGVGVLITGDSGIGKSETALELVKRGHRLVADDNVEIRQINKDELIGKPPKLIEHLLEIRGLGIINVMTLFGAGSILTEKRIRLNINLENWNKQKLYDRVGLNEETLSILDTEITKKTIPVRPGRNVAVIIEVAAMNYRLNIMGINTAEEFSERLNEEIIKNSHKSEE.

Catalysis depends on residues H136 and K157. 151–158 lines the ATP pocket; that stretch reads GDSGIGKS. S158 is a Mg(2+) binding site. The active-site Proton acceptor; for phosphorylation activity. Proton donor; for dephosphorylation activity is the D175. Positions 199-208 are important for the catalytic mechanism of both phosphorylation and dephosphorylation; the sequence is LEIRGLGIIN. Mg(2+) is bound at residue E200. Residue R241 is part of the active site. The segment at 262-267 is important for the catalytic mechanism of dephosphorylation; the sequence is PVRPGR.

This sequence belongs to the HPrK/P family. In terms of assembly, homohexamer. Mg(2+) serves as cofactor.

The catalysed reaction is [HPr protein]-L-serine + ATP = [HPr protein]-O-phospho-L-serine + ADP + H(+). It carries out the reaction [HPr protein]-O-phospho-L-serine + phosphate + H(+) = [HPr protein]-L-serine + diphosphate. Its function is as follows. Catalyzes the ATP- as well as the pyrophosphate-dependent phosphorylation of a specific serine residue in HPr, a phosphocarrier protein of the phosphoenolpyruvate-dependent sugar phosphotransferase system (PTS). HprK/P also catalyzes the pyrophosphate-producing, inorganic phosphate-dependent dephosphorylation (phosphorolysis) of seryl-phosphorylated HPr (P-Ser-HPr). The two antagonistic activities of HprK/P are regulated by several intracellular metabolites, which change their concentration in response to the absence or presence of rapidly metabolisable carbon sources (glucose, fructose, etc.) in the growth medium. Therefore, by controlling the phosphorylation state of HPr, HPrK/P is a sensor enzyme that plays a major role in the regulation of carbon metabolism and sugar transport: it mediates carbon catabolite repression (CCR), and regulates PTS-catalyzed carbohydrate uptake and inducer exclusion. In Staphylococcus aureus (strain Mu3 / ATCC 700698), this protein is HPr kinase/phosphorylase.